A 689-amino-acid chain; its full sequence is MADYLLEIGLEEIPAHLVTESENQLIERIKNFFSDNLLDYKKIQTFSTPRRLAVLVHDLSNYSQSKDEELRGPSLKVAKDESGNWSRAAEGFARSQGTSPAEFDERDGYVYLNKHIEGVSAEEILKKIGIEVVEKMKFSTYMKWADFKLEYVRPIRWLVSLLDSKIVPFQILDVKADRFTRGHRFLSGGKISISEAGDYEETLNNAYVIVDAKVRKNSIRNQIRKIADTNDWNLHVDPDLLEEVNNIVEYPTAFAGVFDDKYLNLPEIVLTTSMRDNQRFFYVTNKQGKILPHFISVRNGDSNQIENVVKGNEKVLVARLEDAEFFFEEDQKHNIDFFMKKAERLVFHEKIGTMTEHMKRVEKIAALLANQLAFNDQEKKDLKRAANICKFDLTTAMVGEFAELQGTMAGIYAKIFGENQTVCQALSEQYLPTSSEGDLPKSKVGAMLALADKLDTLFSFFAAGIIPSGSNDPYGLRRAALGIVRIIGQQKWNFSVSKLLHSLKTAVDKHEDGFLIDFADTKEISRKVIEFFLDRIRQQSSDIRYDLLDASTGKVNEGIINYIFKRVRILASHVADPDFRDVIEALTRVQNLAEKNKSNVEIDPELFVTNSEKRLYQLTKDKDPIVLLSKGDHTVYQFLASLKEPINNYFDENMIMDKNPIIKNNRVAQINLLNNLISSLGDLRKVVVK.

It belongs to the class-II aminoacyl-tRNA synthetase family. Tetramer of two alpha and two beta subunits.

The protein localises to the cytoplasm. The enzyme catalyses tRNA(Gly) + glycine + ATP = glycyl-tRNA(Gly) + AMP + diphosphate. The sequence is that of Glycine--tRNA ligase beta subunit from Oenococcus oeni (strain ATCC BAA-331 / PSU-1).